Here is a 99-residue protein sequence, read N- to C-terminus: Integration host factor subunit alpha (99 aa).

The interval 49-73 (FGNFDLRDKNQRPGRNPKTGEDIPI) is disordered.

It belongs to the bacterial histone-like protein family. As to quaternary structure, heterodimer of an alpha and a beta chain.

In terms of biological role, this protein is one of the two subunits of integration host factor, a specific DNA-binding protein that functions in genetic recombination as well as in transcriptional and translational control. This is Integration host factor subunit alpha from Shigella boydii serotype 18 (strain CDC 3083-94 / BS512).